Consider the following 566-residue polypeptide: Good for full DBP5 activity protein 2 (566 aa).

The span at 1–16 shows a compositional bias: polar residues; sequence MQVQKMVRDNSNNGSD. The disordered stretch occupies residues 1 to 41; the sequence is MQVQKMVRDNSNNGSDKSVHWERRNNNGAGPRYRSRSGNTG.

Functionally, high-copy suppressor of DBP5 mutation. This is Good for full DBP5 activity protein 2 (GFD2) from Saccharomyces cerevisiae (strain ATCC 204508 / S288c) (Baker's yeast).